The chain runs to 509 residues: DAP3-binding cell death enhancer 1 (509 aa).

The transit peptide at 1–23 (MWRLTGILGRALPRLLGPGFRGI) directs the protein to the mitochondrion. Disordered stretches follow at residues 19–60 (GFRG…RNRD) and 143–185 (VLPS…PGLL). Residues 24 to 101 (TPKPTSSDGP…AVLALHLARQ (78 aa)) constitute a propeptide, extended MTS. The span at 26–40 (KPTSSDGPQTTSTTL) shows a compositional bias: polar residues. Basic and acidic residues-rich tracts occupy residues 46–60 (NFDR…RNRD) and 156–168 (GLRE…EEPA). TPR repeat units follow at residues 213–245 (AGPP…QLSV), 246–278 (AIAF…RGYS), 279–313 (KAQY…VQGH), 314–351 (SLAQ…DSGL), 352–385 (TEAQ…SNGD), 386–423 (SQSR…GNEP), and 470–498 (ASST…AMPS). The short motif at 307 to 326 (LAAVQGHSLAQYRYARCLLQ) is the SIFI-degron element.

Belongs to the DELE1 family. As to quaternary structure, interacts with DAP3. Interacts (via TPR repeats) with EIF2AK1/HRI; activating the protein kinase activity of EIF2AK1/HRI, thereby promoting the integrated stress response (ISR). In terms of assembly, homooctamer; oligomerization is required to activate EIF2AK1/HRI. Interacts (via TPR repeats) with EIF2AK1/HRI; activating the protein kinase activity of EIF2AK1/HRI, thereby promoting the integrated stress response (ISR). Post-translationally, unstable protein in absence of stress: imported in the mitochondrial matrix following processing by the mitochondrial-processing peptidase (MPP), where it is degraded by LONP1. Stabilized in response to iron deficiency: iron deficiency impairs mitochondrial import, promoting localization at the mitochondrial surface and stabilization. Cleaved by OMA1 in response to mitochondrial stress, generating the DAP3-binding cell death enhancer 1 short form (DELE1(S) or S-DELE1) that accumulates in the cytosol and activates the protein kinase activity of EIF2AK1/HRI. Protein cleavage by OMA1 can take place at different positions, and apparently does not require a specific sequence motif. Ubiquitinated and degraded by the SIFI complex once the mitochondrial stress has been resolved, thereby providing stress response silencing. Within the SIFI complex, UBR4 initiates ubiquitin chain that are further elongated or branched by KCMF1.

The protein resides in the mitochondrion. The protein localises to the mitochondrion outer membrane. It localises to the mitochondrion inner membrane. Its subcellular location is the cytoplasm. It is found in the cytosol. Its function is as follows. Protein kinase activator that acts as a key activator of the integrated stress response (ISR) following various stresses, such as iron deficiency, mitochondrial stress or mitochondrial DNA breaks. Detects impaired protein import and processing in mitochondria, activating the ISR. May also required for the induction of death receptor-mediated apoptosis through the regulation of caspase activation. Protein kinase activator that activates the ISR in response to iron deficiency: iron deficiency impairs mitochondrial import, promoting DELE1 localization at the mitochondrial surface, where it binds and activates EIF2AK1/HRI to trigger the ISR. In terms of biological role, protein kinase activator generated by protein cleavage in response to mitochondrial stress, which accumulates in the cytosol and specifically binds to and activates the protein kinase activity of EIF2AK1/HRI. It thereby activates the integrated stress response (ISR): EIF2AK1/HRI activation promotes eIF-2-alpha (EIF2S1) phosphorylation, leading to a decrease in global protein synthesis and the induction of selected genes, including the transcription factor ATF4, the master transcriptional regulator of the ISR. Also acts as an activator of PRKN-independent mitophagy: activates the protein kinase activity of EIF2AK1/HRI in response to mitochondrial damage, promoting eIF-2-alpha (EIF2S1) phosphorylation, leading to mitochondrial localization of EIF2S1 followed by induction of mitophagy. In Rattus norvegicus (Rat), this protein is DAP3-binding cell death enhancer 1.